Reading from the N-terminus, the 530-residue chain is Autoinducer-2 kinase (530 aa).

The protein belongs to the FGGY kinase family.

The protein localises to the cytoplasm. The enzyme catalyses (S)-4,5-dihydroxypentane-2,3-dione + ATP = (2S)-2-hydroxy-3,4-dioxopentyl phosphate + ADP + H(+). Its function is as follows. Catalyzes the phosphorylation of autoinducer-2 (AI-2) to phospho-AI-2, which subsequently inactivates the transcriptional regulator LsrR and leads to the transcription of the lsr operon. Phosphorylates the ring-open form of (S)-4,5-dihydroxypentane-2,3-dione (DPD), which is the precursor to all AI-2 signaling molecules, at the C5 position. The polypeptide is Autoinducer-2 kinase (Enterobacter sp. (strain 638)).